The following is a 341-amino-acid chain: Serpentine receptor class epsilon-12 (341 aa).

The next 7 helical transmembrane spans lie at 30–50 (TAFY…LFSA), 57–77 (FTLV…AIIV), 101–121 (AMTF…FSIL), 140–160 (YISY…AILL), 167–187 (IFVV…NQFL), 230–250 (LNFI…SVLF), and 262–282 (ICSL…PQIM).

The protein belongs to the nematode receptor-like protein sre family.

The protein resides in the membrane. This is Serpentine receptor class epsilon-12 (sre-12) from Caenorhabditis elegans.